Reading from the N-terminus, the 545-residue chain is Methionine--tRNA ligase (545 aa).

The 'HIGH' region signature appears at 15 to 25 (PYANGPIHLGH). Zn(2+) is bound by residues Cys146, Cys149, Cys159, and Cys162. Residues 332–336 (KMSKS) carry the 'KMSKS' region motif. Lys335 lines the ATP pocket.

This sequence belongs to the class-I aminoacyl-tRNA synthetase family. MetG type 1 subfamily. As to quaternary structure, monomer. Requires Zn(2+) as cofactor.

It is found in the cytoplasm. It catalyses the reaction tRNA(Met) + L-methionine + ATP = L-methionyl-tRNA(Met) + AMP + diphosphate. Functionally, is required not only for elongation of protein synthesis but also for the initiation of all mRNA translation through initiator tRNA(fMet) aminoacylation. This is Methionine--tRNA ligase from Hamiltonella defensa subsp. Acyrthosiphon pisum (strain 5AT).